A 412-amino-acid polypeptide reads, in one-letter code: Alanyl-tRNA editing protein Aarsd1 (412 aa).

His-109 and His-113 together coordinate Zn(2+). The residue at position 174 (Ser-174) is a Phosphoserine. Zn(2+)-binding residues include Cys-209 and His-213.

It belongs to the class-II aminoacyl-tRNA synthetase family. Alax-L subfamily. Zn(2+) serves as cofactor.

It is found in the cytoplasm. Functionally, functions in trans to edit the amino acid moiety from incorrectly charged Ser-tRNA(Ala). The polypeptide is Alanyl-tRNA editing protein Aarsd1 (Aarsd1) (Mus musculus (Mouse)).